A 214-amino-acid polypeptide reads, in one-letter code: Large ribosomal subunit protein uL3 (214 aa).

A compositionally biased stretch (polar residues) spans 130 to 151 (FSSNRASHGNSRSHNTPGSIGQ). The interval 130-163 (FSSNRASHGNSRSHNTPGSIGQAQDPGRVFPGKR) is disordered. Glutamine 153 is modified (N5-methylglutamine).

The protein belongs to the universal ribosomal protein uL3 family. Part of the 50S ribosomal subunit. Forms a cluster with proteins L14 and L19. In terms of processing, methylated by PrmB.

Its function is as follows. One of the primary rRNA binding proteins, it binds directly near the 3'-end of the 23S rRNA, where it nucleates assembly of the 50S subunit. The polypeptide is Large ribosomal subunit protein uL3 (Chromobacterium violaceum (strain ATCC 12472 / DSM 30191 / JCM 1249 / CCUG 213 / NBRC 12614 / NCIMB 9131 / NCTC 9757 / MK)).